Here is a 253-residue protein sequence, read N- to C-terminus: 5'-nucleotidase SurE (253 aa).

The a divalent metal cation site is built by Asp-8, Asp-9, Ser-39, and Asn-92.

This sequence belongs to the SurE nucleotidase family. A divalent metal cation is required as a cofactor.

The protein resides in the cytoplasm. It carries out the reaction a ribonucleoside 5'-phosphate + H2O = a ribonucleoside + phosphate. Functionally, nucleotidase that shows phosphatase activity on nucleoside 5'-monophosphates. The sequence is that of 5'-nucleotidase SurE from Burkholderia thailandensis (strain ATCC 700388 / DSM 13276 / CCUG 48851 / CIP 106301 / E264).